The primary structure comprises 178 residues: RNA pyrophosphohydrolase (178 aa).

The Nudix hydrolase domain maps to Pro-18–Ala-171. The Nudix box motif lies at Gly-59–Gly-80.

It belongs to the Nudix hydrolase family. RppH subfamily. Requires a divalent metal cation as cofactor.

Functionally, accelerates the degradation of transcripts by removing pyrophosphate from the 5'-end of triphosphorylated RNA, leading to a more labile monophosphorylated state that can stimulate subsequent ribonuclease cleavage. The polypeptide is RNA pyrophosphohydrolase (Brucella abortus (strain 2308)).